The primary structure comprises 335 residues: Biotin synthase (335 aa).

In terms of domain architecture, Radical SAM core spans Y46–R274. [4Fe-4S] cluster-binding residues include C61, C65, and C68. Residues C105, C137, C197, and R269 each contribute to the [2Fe-2S] cluster site.

It belongs to the radical SAM superfamily. Biotin synthase family. As to quaternary structure, homodimer. [4Fe-4S] cluster is required as a cofactor. [2Fe-2S] cluster serves as cofactor.

It carries out the reaction (4R,5S)-dethiobiotin + (sulfur carrier)-SH + 2 reduced [2Fe-2S]-[ferredoxin] + 2 S-adenosyl-L-methionine = (sulfur carrier)-H + biotin + 2 5'-deoxyadenosine + 2 L-methionine + 2 oxidized [2Fe-2S]-[ferredoxin]. It functions in the pathway cofactor biosynthesis; biotin biosynthesis; biotin from 7,8-diaminononanoate: step 2/2. Catalyzes the conversion of dethiobiotin (DTB) to biotin by the insertion of a sulfur atom into dethiobiotin via a radical-based mechanism. This Prochlorococcus marinus (strain MIT 9312) protein is Biotin synthase.